We begin with the raw amino-acid sequence, 394 residues long: Olfactomedin-like protein 3B (394 aa).

An N-terminal signal peptide occupies residues 1 to 18 (MKATIFFLLLTVLAHSRS). The stretch at 29 to 94 (LENRMLAMEE…RVDRVEREMD (66 aa)) forms a coiled coil. Positions 132-383 (VCVNIISSLK…QILYKLELKK (252 aa)) constitute an Olfactomedin-like domain. The cysteines at positions 133 and 310 are disulfide-linked. N-linked (GlcNAc...) asparagine glycans are attached at residues Asn-169, Asn-204, and Asn-233.

It belongs to the OLFML3 family.

It is found in the secreted. In terms of biological role, secreted scaffold protein that plays an essential role in dorsoventral patterning during early development. Stabilizes axial formation by restricting chordin (CHRD) activity on the dorsal side. Acts by facilitating the association between the tolloid proteases and their substrate chordin (CHRD), leading to enhance chordin (CHRD) degradation. The sequence is that of Olfactomedin-like protein 3B (olfml3b) from Danio rerio (Zebrafish).